The primary structure comprises 293 residues: Ribosomal protein L11 methyltransferase (293 aa).

S-adenosyl-L-methionine contacts are provided by T145, G166, D188, and N230.

It belongs to the methyltransferase superfamily. PrmA family.

It is found in the cytoplasm. The catalysed reaction is L-lysyl-[protein] + 3 S-adenosyl-L-methionine = N(6),N(6),N(6)-trimethyl-L-lysyl-[protein] + 3 S-adenosyl-L-homocysteine + 3 H(+). Methylates ribosomal protein L11. This chain is Ribosomal protein L11 methyltransferase, found in Citrobacter koseri (strain ATCC BAA-895 / CDC 4225-83 / SGSC4696).